Consider the following 91-residue polypeptide: uncharacterized protein (91 aa).

A run of 3 helical transmembrane segments spans residues 4-21, 28-50, and 60-82; these read YAII…LRRG, IIEV…SHAV, and VKAF…GTYL.

It localises to the cell membrane. This is an uncharacterized protein from Archaeoglobus fulgidus (strain ATCC 49558 / DSM 4304 / JCM 9628 / NBRC 100126 / VC-16).